The primary structure comprises 514 residues: Histidine ammonia-lyase (514 aa).

A cross-link (5-imidazolinone (Ala-Gly)) is located at residues 142-144 (ASG). Ser143 carries the post-translational modification 2,3-didehydroalanine (Ser).

Belongs to the PAL/histidase family. In terms of processing, contains an active site 4-methylidene-imidazol-5-one (MIO), which is formed autocatalytically by cyclization and dehydration of residues Ala-Ser-Gly.

Its subcellular location is the cytoplasm. The catalysed reaction is L-histidine = trans-urocanate + NH4(+). It functions in the pathway amino-acid degradation; L-histidine degradation into L-glutamate; N-formimidoyl-L-glutamate from L-histidine: step 1/3. The protein is Histidine ammonia-lyase of Sorangium cellulosum (strain So ce56) (Polyangium cellulosum (strain So ce56)).